A 751-amino-acid chain; its full sequence is Cyanobacterial phytochrome B (751 aa).

Position 17 (C17) interacts with a tetrapyrrole. The tract at residues 22 to 511 (IHIPGLIQPH…RSAIIGIVLQ (490 aa)) is chromophore binding domain. Residues 152-320 (TTTEISQILA…MTSVEMSAKE (169 aa)) enclose the GAF domain. The 216-residue stretch at 536–751 (IASHDLKEPL…STFYFTLQDV (216 aa)) folds into the Histidine kinase domain. Position 539 is a phosphohistidine; by autocatalysis (H539).

It in the N-terminal section; belongs to the phytochrome family. Post-translationally, contains one covalently linked tetrapyrrole chromophore.

The catalysed reaction is ATP + protein L-histidine = ADP + protein N-phospho-L-histidine.. In terms of biological role, photoreceptor which exists in two forms that are reversibly interconvertible by light: the R form that absorbs maximally in the red region of the spectrum and the FR form that absorbs maximally in the far-red region. In Nostoc sp. (strain PCC 7120 / SAG 25.82 / UTEX 2576), this protein is Cyanobacterial phytochrome B (bphB).